Consider the following 36-residue polypeptide: Pancreatic polypeptide (36 aa).

Phe36 bears the Phenylalanine amide mark.

Belongs to the NPY family.

It is found in the secreted. Hormone secreted by pancreatic cells that acts as a regulator of pancreatic and gastrointestinal functions. This chain is Pancreatic polypeptide (ppy), found in Aquarana catesbeiana (American bullfrog).